We begin with the raw amino-acid sequence, 512 residues long: MQLNSNEISELIRERIVNFNLESEARNEGTIVSVSDGIITIHGLADVMQGEMLELPNNRFALALNLERHSVGAVVMGPYADLSEGMKVKGTGRILEVPVGNGLLGRVVNTLGQPIDGKGAVSFDRMDPVEVIAPGVIDRKSVDQPIQTGYKAVDSMVPIGRGQRELIIGDRQTGKTAMAIDAIINQKELGVKCIYVAIGQKASTIANVVRKLEEHGALENTIVVVASASEAAALQYLAPYAGCTMGEYFRDRGEDALIVYDDLSKQAVAYRQISLLLKRPPGREAFPGDVFYLHSRLLERAARVNEEYVERFTNGEVKGKTGSLTALPIIETQAGDVSAFVPTNVISITDGQIFLQTQLFNSGLRPAVDPGISVSRVGGAAQTKVIKKLSGGIRTALAQYRELAAFAQFSSDLDEATRRQLDHGEKVTELMKQKQYAPMTVAEQALAIFAAEKGYLTDVALNQISRFEEELMAFGRTNAQPLLDKINQSGDYNDEIESELHSLLKEFTALQS.

169–176 is a binding site for ATP; it reads GDRQTGKT.

This sequence belongs to the ATPase alpha/beta chains family. As to quaternary structure, F-type ATPases have 2 components, CF(1) - the catalytic core - and CF(0) - the membrane proton channel. CF(1) has five subunits: alpha(3), beta(3), gamma(1), delta(1), epsilon(1). CF(0) has three main subunits: a(1), b(2) and c(9-12). The alpha and beta chains form an alternating ring which encloses part of the gamma chain. CF(1) is attached to CF(0) by a central stalk formed by the gamma and epsilon chains, while a peripheral stalk is formed by the delta and b chains.

Its subcellular location is the cell inner membrane. The catalysed reaction is ATP + H2O + 4 H(+)(in) = ADP + phosphate + 5 H(+)(out). Its function is as follows. Produces ATP from ADP in the presence of a proton gradient across the membrane. The alpha chain is a regulatory subunit. This Vibrio campbellii (strain ATCC BAA-1116) protein is ATP synthase subunit alpha 2.